Reading from the N-terminus, the 457-residue chain is Protein unc-93 homolog A (457 aa).

5 helical membrane passes run 8–28, 42–62, 65–85, 86–106, and 140–160; these read VLVV…LQSL, ALST…PLLI, LGCK…SVGN, FFAS…GAAP, and IFFL…SLVF. The N-linked (GlcNAc...) asparagine glycan is linked to Asn190. The next 6 membrane-spanning stretches (helical) occupy residues 202–222, 257–277, 291–311, 320–340, 344–364, and 395–415; these read TLLG…AAFL, LCLL…LSSE, FVGY…VLYG, AVLY…LLLW, ADHL…DAVW, and FVIA…YILL.

Belongs to the unc-93 family. As to expression, expressed in testis, small intestine, spleen, prostate and ovary.

The protein resides in the cell membrane. The protein is Protein unc-93 homolog A (UNC93A) of Homo sapiens (Human).